A 541-amino-acid chain; its full sequence is Chaperonin GroEL (541 aa).

ATP-binding positions include 29–32, lysine 50, 86–90, glycine 416, and aspartate 498; these read TAGP and DGTTT.

Belongs to the chaperonin (HSP60) family. Forms a cylinder of 14 subunits composed of two heptameric rings stacked back-to-back. Interacts with the co-chaperonin GroES.

Its subcellular location is the cytoplasm. The catalysed reaction is ATP + H2O + a folded polypeptide = ADP + phosphate + an unfolded polypeptide.. Functionally, together with its co-chaperonin GroES, plays an essential role in assisting protein folding. The GroEL-GroES system forms a nano-cage that allows encapsulation of the non-native substrate proteins and provides a physical environment optimized to promote and accelerate protein folding. This chain is Chaperonin GroEL, found in Anaplasma phagocytophilum (Ehrlichia phagocytophila).